We begin with the raw amino-acid sequence, 433 residues long: UDP-N-acetylmuramoylalanine--D-glutamate ligase (433 aa).

125–131 (GTSGKTT) provides a ligand contact to ATP.

It belongs to the MurCDEF family.

It is found in the cytoplasm. The enzyme catalyses UDP-N-acetyl-alpha-D-muramoyl-L-alanine + D-glutamate + ATP = UDP-N-acetyl-alpha-D-muramoyl-L-alanyl-D-glutamate + ADP + phosphate + H(+). Its pathway is cell wall biogenesis; peptidoglycan biosynthesis. In terms of biological role, cell wall formation. Catalyzes the addition of glutamate to the nucleotide precursor UDP-N-acetylmuramoyl-L-alanine (UMA). In Nitratidesulfovibrio vulgaris (strain ATCC 29579 / DSM 644 / CCUG 34227 / NCIMB 8303 / VKM B-1760 / Hildenborough) (Desulfovibrio vulgaris), this protein is UDP-N-acetylmuramoylalanine--D-glutamate ligase.